Here is a 373-residue protein sequence, read N- to C-terminus: Methylmalonyl-CoA decarboxylase subunit beta (373 aa).

A run of 10 helical transmembrane segments spans residues 17–37 (FLAFTTGNAIMILVGLILLYL), 38–58 (AFAREFEPLLLGPIAFGCLLA), 81–101 (IFPPLIFLGVGAMTDFGPLIA), 106–126 (LLLGAAAQIGVFAALGGAMML), 132–152 (EAAAIGIIGGADGPTSIYLAT), 156–176 (PHLLGAIAVAAYSYMSLVPLI), 206–226 (IVFPIVATIFISLLLPSITSL), 257–277 (VTIFLATGTGLTMSAEHFLSL), 280–300 (IKIILLGLFAFICGTAGGVLF), and 343–363 (FLLMHAMGPNVAGVIGTAVAA).

It belongs to the GcdB/MmdB/OadB family. The methylmalonyl-CoA decarboxylase is composed of five subunits: the carboxyltransferase alpha subunit (MmdA), the tunnel beta subunit (MmdB), the biotin-containing gamma subunit (MmdC), and the delta (MmdD) and epsilon (MmdE) subunits. Post-translationally, the N-terminus is blocked.

Its subcellular location is the cell membrane. It carries out the reaction (S)-methylmalonyl-CoA + Na(+)(in) + H(+)(out) = propanoyl-CoA + Na(+)(out) + CO2. Its activity is regulated as follows. Completely inhibited by avidin. In terms of biological role, tunnel subunit of the sodium ion pump methylmalonyl-CoA decarboxylase, which converts the chemical energy of a decarboxylation reaction into an electrochemical gradient of Na(+) ions across the cytoplasmic membrane, thereby creating a sodium ion motive force that is used for ATP synthesis. The beta subunit catalyzes the decarboxylation of the carboxybiotin carrier protein and the coupled export of Na(+) ions. Can also convert malonyl-CoA into acetyl-CoA. In Veillonella parvula (Staphylococcus parvulus), this protein is Methylmalonyl-CoA decarboxylase subunit beta.